A 376-amino-acid polypeptide reads, in one-letter code: MSTDVTQLAMALIARPSVTPLDEGCQTLMGKHLSAAGFTLEPMVFEDTTNLWARRGTQAPVFCFAGHTDVVPIGDLARWHTPPFEPTIIDGYLHGRGAADMKGSLAAMLVATERFVAKHPHHNGSIAYLITSDEEGPFINGTTRVIDTLEARNEKITWALVGEPSSTYKLGDVVKNGRRGSLTGNLTVNGVQGHVAYPHLADNPIHKAAPALTELAQMHWDNGNEFFPPTSFQIANINGGTGASNVIPGNLEVMFNFRYSTEVTADELIARVLGILDAHGLDYDISWVFNGLPFLTGDGPLLEATKSAIREVTGYDTDPQTTGGTSDGRFIAPTGAQVIELGPVNATIHKVNECVKIADLEQLALCYEKLLEKLLC.

H67 contributes to the Zn(2+) binding site. D69 is a catalytic residue. Residue D100 participates in Zn(2+) binding. The active-site Proton acceptor is E134. Positions 135, 163, and 349 each coordinate Zn(2+).

This sequence belongs to the peptidase M20A family. DapE subfamily. As to quaternary structure, homodimer. Zn(2+) is required as a cofactor. The cofactor is Co(2+).

It carries out the reaction N-succinyl-(2S,6S)-2,6-diaminopimelate + H2O = (2S,6S)-2,6-diaminopimelate + succinate. It participates in amino-acid biosynthesis; L-lysine biosynthesis via DAP pathway; LL-2,6-diaminopimelate from (S)-tetrahydrodipicolinate (succinylase route): step 3/3. In terms of biological role, catalyzes the hydrolysis of N-succinyl-L,L-diaminopimelic acid (SDAP), forming succinate and LL-2,6-diaminopimelate (DAP), an intermediate involved in the bacterial biosynthesis of lysine and meso-diaminopimelic acid, an essential component of bacterial cell walls. This chain is Succinyl-diaminopimelate desuccinylase, found in Shewanella denitrificans (strain OS217 / ATCC BAA-1090 / DSM 15013).